The chain runs to 394 residues: HORMA domain-containing protein 1 (394 aa).

In terms of domain architecture, HORMA spans 24–226 (QQSLVLVKRL…TPFHTFKVKV (203 aa)). Residues 306-394 (KESPELSISH…RKFSEPKEHI (89 aa)) are disordered. Polar residues predominate over residues 311–325 (LSISHSQVEQLVSKT). A compositionally biased stretch (basic and acidic residues) spans 353-362 (KSKESRKRSQ). Serine 376 carries the phosphoserine modification. The Nuclear localization signal signature appears at 383–386 (KRRK).

In terms of assembly, interacts with HORMAD2. Interacts with IHO1. In terms of processing, phosphorylated at Ser-377 in a SPO11-dependent manner.

The protein localises to the nucleus. The protein resides in the chromosome. Functionally, plays a key role in meiotic progression. Regulates 3 different functions during meiosis: ensures that sufficient numbers of processed DNA double-strand breaks (DSBs) are available for successful homology search by increasing the steady-state numbers of single-stranded DSB ends. Promotes synaptonemal-complex formation independently of its role in homology search. Plays a key role in the male mid-pachytene checkpoint and the female meiotic prophase checkpoint: required for efficient build-up of ATR activity on unsynapsed chromosome regions, a process believed to form the basis of meiotic silencing of unsynapsed chromatin (MSUC) and meiotic prophase quality control in both sexes. This is HORMA domain-containing protein 1 (HORMAD1) from Sus scrofa (Pig).